Consider the following 300-residue polypeptide: Estradiol 17-beta-dehydrogenase 11 (300 aa).

Positions 1-19 (MKFLLDVLLLLPLLIVCSL) are cleaved as a signal peptide. Residue 40–64 (LITGAGHGIGRLTAYEFAKLKSKLV) participates in NADP(+) binding. Serine 172 provides a ligand contact to substrate. Tyrosine 185 functions as the Proton acceptor in the catalytic mechanism.

It belongs to the short-chain dehydrogenases/reductases (SDR) family. 17-beta-HSD 3 subfamily.

It is found in the endoplasmic reticulum. Its subcellular location is the lipid droplet. It carries out the reaction 17beta-estradiol + NAD(+) = estrone + NADH + H(+). The enzyme catalyses 17beta-estradiol + NADP(+) = estrone + NADPH + H(+). Can convert androstan-3-alpha,17-beta-diol (3-alpha-diol) to androsterone in vitro, suggesting that it may participate in androgen metabolism during steroidogenesis. May act by metabolizing compounds that stimulate steroid synthesis and/or by generating metabolites that inhibit it. Has no activity toward DHEA (dehydroepiandrosterone), or A-dione (4-androste-3,17-dione), and only a slight activity toward testosterone to A-dione. This Pongo abelii (Sumatran orangutan) protein is Estradiol 17-beta-dehydrogenase 11 (HSD17B11).